Reading from the N-terminus, the 290-residue chain is F-box protein PP2-A13 (290 aa).

The region spanning 21 to 67 (RKLRLVDLPENCVALIMTRLDPPEICRLARLNRMFRRASSADFIWES) is the F-box domain.

Part of a SCF (ASK-cullin-F-box) protein ligase complex. Interacts with SKP1A/ASK1, SKP1B/ASK2, ASK5, ASK11 and ASK13.

It is found in the nucleus. It participates in protein modification; protein ubiquitination. In terms of biological role, component of SCF(ASK-cullin-F-box) E3 ubiquitin ligase complexes, which may mediate the ubiquitination and subsequent proteasomal degradation of target proteins. This Arabidopsis thaliana (Mouse-ear cress) protein is F-box protein PP2-A13 (PP2A13).